Consider the following 939-residue polypeptide: U3 small nucleolar RNA-associated protein 21 (939 aa).

The residue at position 2 (S2) is an N-acetylserine. WD repeat units lie at residues A40–V71, V81–E111, E119–T158, V168–T201, Q208–K245, S252–L287, Y295–G347, S354–E388, V415–T454, V463–K497, V505–K541, I546–L581, G583–I624, and D626–S664. S772 carries the phosphoserine modification.

Interacts with snoRNA U3. Interacts with MPP10. Interacts (via WD repeats) with UTP18. Component of the ribosomal small subunit (SSU) processome composed of at least 40 protein subunits and snoRNA U3.

It localises to the nucleus. Its subcellular location is the nucleolus. Functionally, involved in nucleolar processing of pre-18S ribosomal RNA and ribosome assembly. This Saccharomyces cerevisiae (strain ATCC 204508 / S288c) (Baker's yeast) protein is U3 small nucleolar RNA-associated protein 21 (UTP21).